The primary structure comprises 546 residues: Chaperonin GroEL (546 aa).

Residues 30–33 (TLGP), Lys-51, 87–91 (DGTTT), Gly-415, 479–481 (NAA), and Asp-495 each bind ATP.

The protein belongs to the chaperonin (HSP60) family. In terms of assembly, forms a cylinder of 14 subunits composed of two heptameric rings stacked back-to-back. Interacts with the co-chaperonin GroES.

It is found in the cytoplasm. It carries out the reaction ATP + H2O + a folded polypeptide = ADP + phosphate + an unfolded polypeptide.. Functionally, together with its co-chaperonin GroES, plays an essential role in assisting protein folding. The GroEL-GroES system forms a nano-cage that allows encapsulation of the non-native substrate proteins and provides a physical environment optimized to promote and accelerate protein folding. This chain is Chaperonin GroEL, found in Paraburkholderia phytofirmans (strain DSM 17436 / LMG 22146 / PsJN) (Burkholderia phytofirmans).